We begin with the raw amino-acid sequence, 223 residues long: Virulence transcriptional regulatory protein PhoP (223 aa).

Positions 2–116 constitute a Response regulatory domain; sequence RVLVVEDNAL…EVMARMQALM (115 aa). D51 is subject to 4-aspartylphosphate. The ompR/PhoB-type DNA-binding region spans 124–222; the sequence is SQVISLPPFQ…VRGQGYLFEL (99 aa).

Post-translationally, phosphorylated by PhoQ.

Its subcellular location is the cytoplasm. Its function is as follows. Member of the two-component regulatory system PhoQ/PhoP involved in virulence and adaptation to low Mg(2+) environments. Necessary for resistance to killing by polymorphonuclear leukocytes (PMNs) and cationic antimicrobial peptides (CAMP) they produce. In Shigella flexneri, this protein is Virulence transcriptional regulatory protein PhoP (phoP).